Here is a 373-residue protein sequence, read N- to C-terminus: Ras association domain-containing protein 7 (373 aa).

Positions A6–P89 constitute a Ras-associating domain. The segment at C122–G150 is disordered. Coiled coils occupy residues W175–A227 and Q248–Q297. Residues G300–A356 are disordered.

As to quaternary structure, interacts with MAP2K7 and GTP-bound NRAS. Polyubiquitinated and degraded by the proteasome upon prolonged stress stimuli.

The protein localises to the cytoplasm. The protein resides in the cytoskeleton. It localises to the microtubule organizing center. Its subcellular location is the centrosome. Negatively regulates stress-induced JNK activation and apoptosis by promoting MAP2K7 phosphorylation and inhibiting its ability to activate JNK. Following prolonged stress, anti-apoptotic effect stops because of degradation of RASSF7 protein via the ubiquitin-proteasome pathway. Required for the activation of AURKB and chromosomal congression during mitosis where it stimulates microtubule polymerization. The protein is Ras association domain-containing protein 7 (RASSF7) of Homo sapiens (Human).